The chain runs to 82 residues: Small ribosomal subunit protein bS16 (82 aa).

This sequence belongs to the bacterial ribosomal protein bS16 family.

The protein is Small ribosomal subunit protein bS16 of Deinococcus deserti (strain DSM 17065 / CIP 109153 / LMG 22923 / VCD115).